Consider the following 301-residue polypeptide: Lysozyme-like protein 3 (301 aa).

Residues 1-15 form the signal peptide; sequence MKLFALLVSITLCYS. Residues 64 to 282 enclose the Ch-type lysozyme domain; that stretch reads HAYSVDISFH…HLSQIVHFST (219 aa).

Belongs to the glycosyl hydrolase 25 family.

Functionally, plays a role in the stress response to heavy metals such as copper, probably in a kgb-1-dependent manner. The protein is Lysozyme-like protein 3 of Caenorhabditis elegans.